We begin with the raw amino-acid sequence, 275 residues long: Polyamine aminopropyltransferase (275 aa).

A PABS domain is found at 2–235 (ELWFTEKQTK…GLWTFTIGSK (234 aa)). Gln31 provides a ligand contact to S-methyl-5'-thioadenosine. Residues His62 and Asp86 each coordinate spermidine. S-methyl-5'-thioadenosine contacts are provided by residues Glu106 and 137–138 (DG). The Proton acceptor role is filled by Asp155. 155–158 (DSTE) lines the spermidine pocket. Residue Pro162 coordinates S-methyl-5'-thioadenosine.

This sequence belongs to the spermidine/spermine synthase family. In terms of assembly, homodimer or homotetramer.

Its subcellular location is the cytoplasm. The catalysed reaction is S-adenosyl 3-(methylsulfanyl)propylamine + putrescine = S-methyl-5'-thioadenosine + spermidine + H(+). Its pathway is amine and polyamine biosynthesis; spermidine biosynthesis; spermidine from putrescine: step 1/1. Its function is as follows. Catalyzes the irreversible transfer of a propylamine group from the amino donor S-adenosylmethioninamine (decarboxy-AdoMet) to putrescine (1,4-diaminobutane) to yield spermidine. The chain is Polyamine aminopropyltransferase from Bacillus cereus (strain ATCC 10987 / NRS 248).